Here is a 317-residue protein sequence, read N- to C-terminus: Glucokinase (317 aa).

6–12 (GVDIGGT) contacts ATP.

This sequence belongs to the ROK (NagC/XylR) family. Homooligomer (possibly a homotetramer). Alternatively, it may form a heterotetramer of two glucokinase subunits with two ORF2 (AC P40182) proteins.

The protein localises to the cytoplasm. It catalyses the reaction D-glucose + ATP = D-glucose 6-phosphate + ADP + H(+). In terms of biological role, a probable glucose kinase. Required for glucose repression of many different genes, restores glucose kinase activity in E.coli glk mutants. The protein is Glucokinase (glkA) of Streptomyces coelicolor (strain ATCC BAA-471 / A3(2) / M145).